We begin with the raw amino-acid sequence, 342 residues long: Signal-regulatory protein beta-2 (342 aa).

Positions 1–32 (MCSTMSAPTCLAHLPPCFLLLALVLVPSDASG) are cleaved as a signal peptide. 2 Ig-like V-type domains span residues 33–143 (QSSR…KSDE) and 157–258 (PDLW…SGQG). Residues 33 to 287 (QSSRNDWQVL…EPATEMSPTG (255 aa)) lie on the Extracellular side of the membrane. Cysteines 60 and 127 form a disulfide. N-linked (GlcNAc...) asparagine glycosylation is found at Asn116, Asn179, and Asn231. A disulfide bridge connects residues Cys180 and Cys242. A helical membrane pass occupies residues 288–308 (LLVVFAPVVLGLKAITLAALL). The Cytoplasmic segment spans residues 309-342 (LALATSRRSPGQEDVKTTGPAGAMNTLAWSKGQE). The segment at 317–342 (SPGQEDVKTTGPAGAMNTLAWSKGQE) is disordered.

Its subcellular location is the membrane. The sequence is that of Signal-regulatory protein beta-2 (SIRPB2) from Homo sapiens (Human).